The chain runs to 156 residues: Xanthocillin biosynthesis cluster protein D (156 aa).

N107 and N120 each carry an N-linked (GlcNAc...) asparagine glycan. Residues 131–153 traverse the membrane as a helical segment; that stretch reads IHLNAIALVATVWYGFTLSSSLL.

It is found in the membrane. It functions in the pathway secondary metabolite biosynthesis. Part of the gene cluster that mediates the biosynthesis of the isocyanide xanthocillin and its derivatives. The first step of the pathway consists in the conversion of tyrosine into a vinyl-isonitrile intermediate by the isocyanide synthase xanB. Subsequent oxidative dimerization of this intermediate to form xanthocillin may involve the cytochrome P450 monooxygenase xanG, whose expression is coregulated with that of XanB. Xanthocillin can be further modified by the isonitrile hydratase-like protein xanA which introduces N-formyl groups and the methyltransferase xanE which introduces methyl groups, leading to the production of several derivatives including fumiformamide. Finally, fumiformamide can be subject to both oxidative and reductive cyclization to yield melanocins E and F, respectively. The sequence is that of Xanthocillin biosynthesis cluster protein D from Aspergillus fumigatus (strain ATCC MYA-4609 / CBS 101355 / FGSC A1100 / Af293) (Neosartorya fumigata).